Consider the following 124-residue polypeptide: MADINKIAEELGTLTILEAADLVKLLEEKWGVSAAAPVAAAGAAAAPAEAEEEKTEFNVVLTEAGANKIAVIKAVREVKAGLGLVDAKKLVEGTPAVILEAVSKDEANAAKAKLEEAGAKVDVK.

This sequence belongs to the bacterial ribosomal protein bL12 family. As to quaternary structure, homodimer. Part of the ribosomal stalk of the 50S ribosomal subunit. Forms a multimeric L10(L12)X complex, where L10 forms an elongated spine to which 2 to 4 L12 dimers bind in a sequential fashion. Binds GTP-bound translation factors.

Functionally, forms part of the ribosomal stalk which helps the ribosome interact with GTP-bound translation factors. Is thus essential for accurate translation. This is Large ribosomal subunit protein bL12 from Akkermansia muciniphila (strain ATCC BAA-835 / DSM 22959 / JCM 33894 / BCRC 81048 / CCUG 64013 / CIP 107961 / Muc).